Here is a 583-residue protein sequence, read N- to C-terminus: CTP synthase (583 aa).

An amidoligase domain region spans residues 1–278 (MRKHPQTATK…DAYVVRRLNL (278 aa)). Residue Ser-20 coordinates CTP. UTP is bound at residue Ser-20. Residues 21–26 (SLGKGL) and Asp-78 contribute to the ATP site. The Mg(2+) site is built by Asp-78 and Glu-152. Residues 159-161 (DIE), 199-204 (KTKPTQ), and Lys-235 each bind CTP. UTP is bound by residues 199 to 204 (KTKPTQ) and Lys-235. In terms of domain architecture, Glutamine amidotransferase type-1 spans 303 to 551 (RIALVGKYVE…VGAAMDYKAG (249 aa)). Position 366 (Gly-366) interacts with L-glutamine. The Nucleophile; for glutamine hydrolysis role is filled by Cys-393. L-glutamine-binding positions include 394-397 (LGLQ), Glu-416, and Arg-477. Catalysis depends on residues His-524 and Glu-526. Residues 560-583 (EQSSNGIQHRDSAARPIPEPAARG) are disordered.

This sequence belongs to the CTP synthase family. In terms of assembly, homotetramer.

The enzyme catalyses UTP + L-glutamine + ATP + H2O = CTP + L-glutamate + ADP + phosphate + 2 H(+). It carries out the reaction L-glutamine + H2O = L-glutamate + NH4(+). It catalyses the reaction UTP + NH4(+) + ATP = CTP + ADP + phosphate + 2 H(+). Its pathway is pyrimidine metabolism; CTP biosynthesis via de novo pathway; CTP from UDP: step 2/2. Its activity is regulated as follows. Allosterically activated by GTP, when glutamine is the substrate; GTP has no effect on the reaction when ammonia is the substrate. The allosteric effector GTP functions by stabilizing the protein conformation that binds the tetrahedral intermediate(s) formed during glutamine hydrolysis. Inhibited by the product CTP, via allosteric rather than competitive inhibition. Its function is as follows. Catalyzes the ATP-dependent amination of UTP to CTP with either L-glutamine or ammonia as the source of nitrogen. Regulates intracellular CTP levels through interactions with the four ribonucleotide triphosphates. In Mycolicibacterium paratuberculosis (strain ATCC BAA-968 / K-10) (Mycobacterium paratuberculosis), this protein is CTP synthase.